The sequence spans 177 residues: Putative rubredoxin (177 aa).

Residues 1 to 38 (MKICRICGYQIPEGEFNLLEDGWVCPRCGVGKEELQDS) form the Rubredoxin-like domain. The Fe cation site is built by C4, C7, C25, and C28.

It belongs to the rubredoxin family. Requires Fe(3+) as cofactor.

This is Putative rubredoxin (rdxA) from Methanothermobacter thermautotrophicus (strain ATCC 29096 / DSM 1053 / JCM 10044 / NBRC 100330 / Delta H) (Methanobacterium thermoautotrophicum).